The sequence spans 685 residues: Methionine--tRNA ligase (685 aa).

The 'HIGH' region motif lies at 12-22 (PYANGSIHLGH). 4 residues coordinate Zn(2+): Cys143, Cys146, Cys156, and Cys159. The 'KMSKS' region motif lies at 339 to 343 (KMSKS). An ATP-binding site is contributed by Lys342. The tRNA-binding domain occupies 582-685 (DFMKIDMRVA…AGAQPGDKVG (104 aa)).

It belongs to the class-I aminoacyl-tRNA synthetase family. MetG type 1 subfamily. As to quaternary structure, homodimer. Zn(2+) is required as a cofactor.

It is found in the cytoplasm. It catalyses the reaction tRNA(Met) + L-methionine + ATP = L-methionyl-tRNA(Met) + AMP + diphosphate. Functionally, is required not only for elongation of protein synthesis but also for the initiation of all mRNA translation through initiator tRNA(fMet) aminoacylation. In Neisseria meningitidis serogroup A / serotype 4A (strain DSM 15465 / Z2491), this protein is Methionine--tRNA ligase.